The following is a 265-amino-acid chain: tRNA (guanine-N(1)-)-methyltransferase (265 aa).

S-adenosyl-L-methionine-binding positions include Gly119 and 139–144 (VGDYIL).

The protein belongs to the RNA methyltransferase TrmD family. Homodimer.

The protein localises to the cytoplasm. The enzyme catalyses guanosine(37) in tRNA + S-adenosyl-L-methionine = N(1)-methylguanosine(37) in tRNA + S-adenosyl-L-homocysteine + H(+). Functionally, specifically methylates guanosine-37 in various tRNAs. This is tRNA (guanine-N(1)-)-methyltransferase from Pseudoalteromonas atlantica (strain T6c / ATCC BAA-1087).